The chain runs to 288 residues: ATP synthase gamma chain (288 aa).

The protein belongs to the ATPase gamma chain family. In terms of assembly, F-type ATPases have 2 components, CF(1) - the catalytic core - and CF(0) - the membrane proton channel. CF(1) has five subunits: alpha(3), beta(3), gamma(1), delta(1), epsilon(1). CF(0) has three main subunits: a, b and c.

It is found in the cell inner membrane. In terms of biological role, produces ATP from ADP in the presence of a proton gradient across the membrane. The gamma chain is believed to be important in regulating ATPase activity and the flow of protons through the CF(0) complex. The polypeptide is ATP synthase gamma chain (Trichlorobacter lovleyi (strain ATCC BAA-1151 / DSM 17278 / SZ) (Geobacter lovleyi)).